The following is a 274-amino-acid chain: Putative ABC transporter ATP-binding protein alr3946 (274 aa).

The 237-residue stretch at 6 to 242 (LTFEQVYYTY…REILDSIELG (237 aa)) folds into the ABC transporter domain. 40-47 (GRNGCGKT) contacts ATP.

Belongs to the ABC transporter superfamily.

The protein localises to the cell inner membrane. Probably part of an ABC transporter complex. Responsible for energy coupling to the transport system. The sequence is that of Putative ABC transporter ATP-binding protein alr3946 from Nostoc sp. (strain PCC 7120 / SAG 25.82 / UTEX 2576).